The chain runs to 415 residues: Gamma-glutamyl phosphate reductase (415 aa).

This sequence belongs to the gamma-glutamyl phosphate reductase family.

Its subcellular location is the cytoplasm. The catalysed reaction is L-glutamate 5-semialdehyde + phosphate + NADP(+) = L-glutamyl 5-phosphate + NADPH + H(+). It participates in amino-acid biosynthesis; L-proline biosynthesis; L-glutamate 5-semialdehyde from L-glutamate: step 2/2. Functionally, catalyzes the NADPH-dependent reduction of L-glutamate 5-phosphate into L-glutamate 5-semialdehyde and phosphate. The product spontaneously undergoes cyclization to form 1-pyrroline-5-carboxylate. This Mycobacterium sp. (strain JLS) protein is Gamma-glutamyl phosphate reductase.